The chain runs to 192 residues: NADH dehydrogenase [ubiquinone] iron-sulfur protein 3 (192 aa).

Belongs to the complex I 30 kDa subunit family. Complex I is composed of about 45 different subunits. This is a component of the iron-sulfur (IP) fragment of the enzyme.

The protein localises to the mitochondrion inner membrane. It carries out the reaction a ubiquinone + NADH + 5 H(+)(in) = a ubiquinol + NAD(+) + 4 H(+)(out). Functionally, core subunit of the mitochondrial membrane respiratory chain NADH dehydrogenase (Complex I) that is believed to belong to the minimal assembly required for catalysis. Complex I functions in the transfer of electrons from NADH to the respiratory chain. The immediate electron acceptor for the enzyme is believed to be ubiquinone. This Beta trigyna (Caucasian wild beet) protein is NADH dehydrogenase [ubiquinone] iron-sulfur protein 3 (NAD9).